We begin with the raw amino-acid sequence, 240 residues long: Nicotinamide riboside kinase (240 aa).

13-21 (GCSSSGKTT) lines the ATP pocket. Mg(2+)-binding residues include T20 and D39. The Proton acceptor role is filled by D39. Residues 39-42 (DDFY) and 59-60 (WD) each bind substrate. Residue R158 participates in ATP binding. Residues R159 and 164–165 (GY) each bind substrate. Residues 162–164 (RKG) and 208–210 (KSK) contribute to the ATP site.

This sequence belongs to the uridine kinase family. NRK subfamily.

It catalyses the reaction beta-nicotinamide D-riboside + ATP = beta-nicotinamide D-ribonucleotide + ADP + H(+). The enzyme catalyses beta-D-ribosylnicotinate + ATP = nicotinate beta-D-ribonucleotide + ADP + H(+). It functions in the pathway cofactor biosynthesis; NAD(+) biosynthesis. Functionally, catalyzes the phosphorylation of nicotinamide riboside (NR) and nicotinic acid riboside (NaR) to form nicotinamide mononucleotide (NMN) and nicotinic acid mononucleotide (NaMN). The sequence is that of Nicotinamide riboside kinase (NRK1) from Saccharomyces cerevisiae (strain ATCC 204508 / S288c) (Baker's yeast).